Reading from the N-terminus, the 305-residue chain is Ribonuclease BN (305 aa).

Zn(2+)-binding residues include H64, H66, D68, H69, H141, D212, and H270. D68 functions as the Proton acceptor in the catalytic mechanism.

This sequence belongs to the RNase Z family. RNase BN subfamily. In terms of assembly, homodimer. It depends on Zn(2+) as a cofactor.

Zinc phosphodiesterase, which has both exoribonuclease and endoribonuclease activities. The sequence is that of Ribonuclease BN from Escherichia coli O45:K1 (strain S88 / ExPEC).